The following is a 231-amino-acid chain: MTITIALPSKGRMKDDASAIFERAGMKIVAVGNDRSYRGRVEGWDDVEVAFLSASEISREVGSGAVDFGVTGEDLVREGIADVDARVEFAARLGFGHADVVVAVPEVWYDVDTMADLGDVAADFRARHGRRLAIATKYWRLTQQFFSGSHGIQLYRIVESLGATEGAPASGSADIIVDITSTGSTLKANHLKILSDGVILRSEACLVRARKPAHDGYPMIDRIISSVRSVL.

Belongs to the ATP phosphoribosyltransferase family. Short subfamily. Heteromultimer composed of HisG and HisZ subunits.

The protein resides in the cytoplasm. The catalysed reaction is 1-(5-phospho-beta-D-ribosyl)-ATP + diphosphate = 5-phospho-alpha-D-ribose 1-diphosphate + ATP. It participates in amino-acid biosynthesis; L-histidine biosynthesis; L-histidine from 5-phospho-alpha-D-ribose 1-diphosphate: step 1/9. In terms of biological role, catalyzes the condensation of ATP and 5-phosphoribose 1-diphosphate to form N'-(5'-phosphoribosyl)-ATP (PR-ATP). Has a crucial role in the pathway because the rate of histidine biosynthesis seems to be controlled primarily by regulation of HisG enzymatic activity. The sequence is that of ATP phosphoribosyltransferase (hisG) from Sinorhizobium fredii (strain NBRC 101917 / NGR234).